A 59-amino-acid chain; its full sequence is uncharacterized protein (59 aa).

A helical membrane pass occupies residues 7–24; that stretch reads FLLVFIILAQLLSCTPSA.

The protein localises to the membrane. This is an uncharacterized protein from Rickettsia prowazekii (strain Madrid E).